Reading from the N-terminus, the 476-residue chain is Aspartate kinase Ask_Ect (476 aa).

An ACT domain is found at 405–476 (SAIGSDLKVK…ENHGDVIAAA (72 aa)).

Belongs to the aspartokinase family. In terms of assembly, monomer.

The protein resides in the cytoplasm. It carries out the reaction L-aspartate + ATP = 4-phospho-L-aspartate + ADP. It participates in amine and polyamine biosynthesis; ectoine biosynthesis. Its activity is regulated as follows. Allosterically and strongly feedback inhibited by tryptophan. The presence of either 650 mM NaCl or KCl reduces the inhibition by tryptophan. Its function is as follows. Involved in the biosynthesis of L-aspartate-beta-semialdehyde, which is an intermediate in the biosynthesis of ectoine, a highly soluble organic osmolyte, called compatible solute. Ectoine is used to avoid excessive water efflux, plasmolysis, molecular crowding of the cytoplasm, and cessation of growth in high salinity environments. Catalyzes the phosphorylation of the beta-carboxyl group of L-aspartate to yield 4-phospho-L-aspartate. In Stutzerimonas stutzeri (strain A1501) (Pseudomonas stutzeri), this protein is Aspartate kinase Ask_Ect (ask).